Reading from the N-terminus, the 55-residue chain is Large ribosomal subunit protein bL33 (55 aa).

It belongs to the bacterial ribosomal protein bL33 family.

This chain is Large ribosomal subunit protein bL33, found in Rhizorhabdus wittichii (strain DSM 6014 / CCUG 31198 / JCM 15750 / NBRC 105917 / EY 4224 / RW1) (Sphingomonas wittichii).